Consider the following 653-residue polypeptide: tRNA-guanine(15) transglycosylase (653 aa).

The active-site Nucleophile is Asp-91. The substrate site is built by Asp-126 and Ala-193. Zn(2+) is bound by residues Cys-276, Cys-278, and Cys-281. A PUA domain is found at 578 to 653 (AWRVAVNEES…QAVKTRKGGF (76 aa)).

It belongs to the archaeosine tRNA-ribosyltransferase family. It depends on Zn(2+) as a cofactor.

It carries out the reaction guanosine(15) in tRNA + 7-cyano-7-deazaguanine = 7-cyano-7-carbaguanosine(15) in tRNA + guanine. The protein operates within tRNA modification; archaeosine-tRNA biosynthesis. Functionally, exchanges the guanine residue with 7-cyano-7-deazaguanine (preQ0) at position 15 in the dihydrouridine loop (D-loop) of archaeal tRNAs. This is tRNA-guanine(15) transglycosylase from Methanothermobacter thermautotrophicus (strain ATCC 29096 / DSM 1053 / JCM 10044 / NBRC 100330 / Delta H) (Methanobacterium thermoautotrophicum).